Reading from the N-terminus, the 242-residue chain is Purine nucleoside phosphorylase SCO2081 (242 aa).

Residues histidine 68, cysteine 106, and histidine 123 each contribute to the Zn(2+) site.

It belongs to the purine nucleoside phosphorylase YfiH/LACC1 family. In terms of assembly, homodimer. It depends on Cu(2+) as a cofactor. The cofactor is Zn(2+).

It carries out the reaction adenosine + phosphate = alpha-D-ribose 1-phosphate + adenine. The enzyme catalyses S-methyl-5'-thioadenosine + phosphate = 5-(methylsulfanyl)-alpha-D-ribose 1-phosphate + adenine. The catalysed reaction is inosine + phosphate = alpha-D-ribose 1-phosphate + hypoxanthine. It catalyses the reaction adenosine + H2O + H(+) = inosine + NH4(+). In terms of biological role, purine nucleoside enzyme that catalyzes the phosphorolysis of adenosine and inosine nucleosides, yielding D-ribose 1-phosphate and the respective free bases, adenine and hypoxanthine. Also catalyzes the phosphorolysis of S-methyl-5'-thioadenosine into adenine and S-methyl-5-thio-alpha-D-ribose 1-phosphate. Also has adenosine deaminase activity. The sequence is that of Purine nucleoside phosphorylase SCO2081 from Streptomyces coelicolor (strain ATCC BAA-471 / A3(2) / M145).